A 127-amino-acid polypeptide reads, in one-letter code: Large-conductance mechanosensitive channel (127 aa).

3 consecutive transmembrane segments (helical) span residues 9-29 (EFAM…GVAF), 32-52 (IVTA…LGGV), and 75-95 (VIDF…INLL).

Belongs to the MscL family. In terms of assembly, homopentamer.

It localises to the cell inner membrane. In terms of biological role, channel that opens in response to stretch forces in the membrane lipid bilayer. May participate in the regulation of osmotic pressure changes within the cell. In Legionella pneumophila (strain Lens), this protein is Large-conductance mechanosensitive channel.